Reading from the N-terminus, the 192-residue chain is Elongation factor P (192 aa).

Belongs to the elongation factor P family.

It localises to the cytoplasm. It participates in protein biosynthesis; polypeptide chain elongation. Functionally, involved in peptide bond synthesis. Stimulates efficient translation and peptide-bond synthesis on native or reconstituted 70S ribosomes in vitro. Probably functions indirectly by altering the affinity of the ribosome for aminoacyl-tRNA, thus increasing their reactivity as acceptors for peptidyl transferase. The sequence is that of Elongation factor P from Borrelia duttonii (strain Ly).